The chain runs to 499 residues: MLSLIVACLVLPLICYKLVRSYNQSREDEQFAASKGCQPPRKWSAKWPLGLDMLVKAVRYEKRQQILQLFLEEVAASGSTFEQNLLFARGIDTVEPRNIEAILSTQFTGSGIFTQDGPQWKHSRELLRPQFMTNRFRNFEQIRHAVNNLISSVPDSGVVDLQPLFFRLTFETTLFLLFGHYLPSLKSEGITGHESQFANAFNLGQDYLAQRGRLGDLYWLLGGREFKDACKVCHDFIDNAVQKALKHSSREKKVSDEEKETYVFIDALVQETREPSVLRDQCLNILLAGRDTTACCLTWTLRLLVQHPDVLSKLRDEVRDTIGMGPDAPDPTISQVKKLSYLSLVIKEVLRLYPSVPVNSRAAVKTTTLPTGGGPDGSAPLLVRRGEAVGYCVYAMHRRKDIYGPDADCFRPERWENDALKDVGYGYLPFNGGPRICLGQEFALLEVGYTVVRLLQTFETIEEAETKVPGAPLGEEKQTLTLVVSSGEGCWVSMKKGTK.

The N-terminal stretch at 1–21 (MLSLIVACLVLPLICYKLVRS) is a signal peptide. The N-linked (GlcNAc...) asparagine glycan is linked to N23. Position 437 (C437) interacts with heme.

It belongs to the cytochrome P450 family. Heme is required as a cofactor.

Together with an NADPH cytochrome P450 the enzyme system catalyzes the terminal hydroxylation as the first step in the assimilation of alkanes and fatty acids. The chain is Cytochrome P450 ARB_01131 from Arthroderma benhamiae (strain ATCC MYA-4681 / CBS 112371) (Trichophyton mentagrophytes).